A 336-amino-acid polypeptide reads, in one-letter code: Prenytransferase ascA (336 aa).

Positions 1–26 are disordered; it reads MAAKSRSPKRGTSEKTPLVEKEAPYQ. Over residues 11 to 23 the composition is skewed to basic and acidic residues; the sequence is GTSEKTPLVEKEA. Transmembrane regions (helical) follow at residues 52–72, 74–94, 131–151, 179–199, 206–226, 251–271, 272–292, and 314–334; these read PHGN…ASAI, PTEL…TFLM, GHVF…SLPI, VILG…VGLP, FVPT…YDVV, LEGL…TLGY, LVGM…FGLV, and FAIL…DYVV.

This sequence belongs to the UbiA prenyltransferase family. Mg(2+) is required as a cofactor.

The protein localises to the membrane. The enzyme catalyses orsellinate + (2E,6E)-farnesyl diphosphate = ilicicolinate B + diphosphate. It functions in the pathway secondary metabolite biosynthesis; terpenoid biosynthesis. Its function is as follows. Prenytransferase; part of the asc-1 gene cluster that mediates the biosynthesis of both ascochlorin and ascofuranone, a strong inhibitor of cyanide-insensitive alternative oxidases and a promising drug candidate against African trypanosomiasis. The first step in the pathway is performed by the non-reducing polyketide synthase ascC that produces orsellinic acid by condensing acetyl-CoA with 3 malonyl-CoA units. Orsellinic acid is then prenylated by the prenyltransferase ascA to yield ilicicolinic acid B. Ilicicolinic acid B is further reduced to ilicicolin B by the reductase ascB. The halogenase ascD then chlorinates ilicicolin B to produce ilicicolin A which is converted to ilicicolin A epoxide by the cytochrome P450 monooxygenase ascE that catalyzes stereoselective epoxidation of the terminal double bond of the prenyl group. Ilicicolin A epoxide is the last common precursor for the biosynthesis of ascofuranone and ascochlorin. The terpene cyclase ascF produces a monocyclic terpene, and the cyclization reaction is proposed to be initiated by protonation of the terminal epoxide of ilicicolin A epoxide to generate a monocyclic tertiarycation, which is followed by a series of hydride and methyl shifts with abstraction of proton, leading to the formation of the (14S,15R,19R)-trimethylcyclohexanone ring structure of ilicicolin C, which is finally reduced to ascochlorin by the dehydrogenase ascG. On the other hand, ilicicolin A epoxide is hydroxylated by the cytochrome P450 monooxygenase ascH, and the resultant product is cyclized by the terpene cyclase ascI to ascofuranol via protonation-initiated epoxide ring opening, which facilitates the 6-endo-tet cyclization to form the tetrahy-drofuran ring. Finally, ascofuranol is oxidized into ascofuranone by ascJ. The sequence is that of Prenytransferase ascA from Acremonium egyptiacum (Oospora egyptiaca).